A 163-amino-acid chain; its full sequence is MHKKYFIGTSILIAVFVVIFDQVTKYIIATTMKIGDSFEVIPHFLNITSHRNNGAAWGILSGKMTFFFIITIIILIALVYFFIKDAQYNLFMQVAISLLFAGALGNFIDRILTGEVVDFIDTNIFGYDFPIFNIADSSLTIGVILIIIALLKDTSNKKDKEVK.

3 consecutive transmembrane segments (helical) span residues 11–31, 63–83, and 88–108; these read ILIA…IATT, KMTF…YFFI, and YNLF…GNFI. Residues Asp118 and Asp136 contribute to the active site. A helical transmembrane segment spans residues 131-151; the sequence is IFNIADSSLTIGVILIIIALL.

Belongs to the peptidase A8 family.

The protein resides in the cell membrane. It carries out the reaction Release of signal peptides from bacterial membrane prolipoproteins. Hydrolyzes -Xaa-Yaa-Zaa-|-(S,diacylglyceryl)Cys-, in which Xaa is hydrophobic (preferably Leu), and Yaa (Ala or Ser) and Zaa (Gly or Ala) have small, neutral side chains.. Its pathway is protein modification; lipoprotein biosynthesis (signal peptide cleavage). Its function is as follows. This protein specifically catalyzes the removal of signal peptides from prolipoproteins. This Staphylococcus aureus protein is Lipoprotein signal peptidase.